Consider the following 354-residue polypeptide: 3-isopropylmalate dehydrogenase (354 aa).

Arginine 96, arginine 106, arginine 132, and aspartate 223 together coordinate substrate. Mg(2+) is bound by residues aspartate 223, aspartate 247, and aspartate 251. Residue 283 to 295 (GSAPDIAGQGKAD) coordinates NAD(+).

It belongs to the isocitrate and isopropylmalate dehydrogenases family. LeuB type 2 subfamily. As to quaternary structure, homodimer. It depends on Mg(2+) as a cofactor. Mn(2+) serves as cofactor.

The protein localises to the cytoplasm. The enzyme catalyses (2R,3S)-3-isopropylmalate + NAD(+) = 4-methyl-2-oxopentanoate + CO2 + NADH. The protein operates within amino-acid biosynthesis; L-leucine biosynthesis; L-leucine from 3-methyl-2-oxobutanoate: step 3/4. Functionally, catalyzes the oxidation of 3-carboxy-2-hydroxy-4-methylpentanoate (3-isopropylmalate) to 3-carboxy-4-methyl-2-oxopentanoate. The product decarboxylates to 4-methyl-2 oxopentanoate. This is 3-isopropylmalate dehydrogenase from Thermobifida fusca (strain YX).